The sequence spans 188 residues: Small ribosomal subunit protein uS7 (188 aa).

It belongs to the universal ribosomal protein uS7 family. Part of the 30S ribosomal subunit.

In terms of biological role, one of the primary rRNA binding proteins, it binds directly to 16S rRNA where it nucleates assembly of the head domain of the 30S subunit. Is located at the subunit interface close to the decoding center. This chain is Small ribosomal subunit protein uS7, found in Methanococcus maripaludis (strain C7 / ATCC BAA-1331).